Here is a 328-residue protein sequence, read N- to C-terminus: PLASTID TRANSCRIPTIONALLY ACTIVE protein 6, chloroplastic (328 aa).

Residues methionine 1–serine 14 show a composition bias toward low complexity. Positions methionine 1–tyrosine 21 are disordered. The transit peptide at methionine 1 to aspartate 59 directs the protein to the chloroplast. Positions arginine 267–leucine 275 match the Nuclear localization signal motif. The RNA binding domain signature appears at glutamate 301–leucine 319.

As to quaternary structure, subunit of the plastid-encoded RNA polymerase (PEP) complex. Component of a large nuclear subcomplex that may include other PEP subunits (e.g. PTAC12/HMR/PAP5, PTAC14/PAP7 and PTAC7/PAP12). Binds directly to PTAC12/HMR/PAP5 in the nucleus. Interacts with MTERF5. Mostly expressed in rosette leaves, stems and flowers, and, to a lower extent, in roots and cauline leaves.

It is found in the plastid. The protein localises to the chloroplast. The protein resides in the chloroplast thylakoid. Its subcellular location is the nucleus. It localises to the nucleoplasm. In terms of biological role, essential protein involved in plastid gene expression and in chloroplast biogenesis. Links photomorphogenesis and chloroplast biogenesis through its dual localization; required for the formation of late photobodies in the nucleus, as well as for phytochrome B-mediated signaling cascade and subsequent reshaping of the plastid-encoded RNA polymerase (PEP) activity. Binds RNA via specific recognition motifs of viral origin. Recruited by MTERF5 to the transcriptionally paused region of psbEFLJ. Promotes leaf greening. This is PLASTID TRANSCRIPTIONALLY ACTIVE protein 6, chloroplastic from Arabidopsis thaliana (Mouse-ear cress).